Reading from the N-terminus, the 397-residue chain is Elongation factor Tu (397 aa).

Residues 10–207 (KPHVNIGTIG…AVDESIPEPV (198 aa)) form the tr-type G domain. Residues 19 to 26 (GHVDHGKT) form a G1 region. 19–26 (GHVDHGKT) contacts GTP. Threonine 26 is a binding site for Mg(2+). Residues 63-67 (GITIN) are G2. The tract at residues 84 to 87 (DAPG) is G3. GTP contacts are provided by residues 84-88 (DAPGH) and 139-142 (NKSD). The interval 139–142 (NKSD) is G4. A G5 region spans residues 177–179 (SGL).

It belongs to the TRAFAC class translation factor GTPase superfamily. Classic translation factor GTPase family. EF-Tu/EF-1A subfamily. As to quaternary structure, monomer.

It localises to the cytoplasm. It carries out the reaction GTP + H2O = GDP + phosphate + H(+). Its function is as follows. GTP hydrolase that promotes the GTP-dependent binding of aminoacyl-tRNA to the A-site of ribosomes during protein biosynthesis. This Clavibacter sepedonicus (Clavibacter michiganensis subsp. sepedonicus) protein is Elongation factor Tu.